The chain runs to 143 residues: Transcriptional regulator MraZ (143 aa).

2 SpoVT-AbrB domains span residues 5-47 (EYHH…SMEE) and 76-119 (AMES…AKER).

The protein belongs to the MraZ family. As to quaternary structure, forms oligomers.

It localises to the cytoplasm. It is found in the nucleoid. The chain is Transcriptional regulator MraZ from Lactobacillus helveticus (strain DPC 4571).